We begin with the raw amino-acid sequence, 551 residues long: E3 SUMO-protein ligase CBX4 (551 aa).

Residues 11–69 form the Chromo domain; the sequence is FAVESIEKKRIRKGRVEYLVKWRGWSPKYNTWEPEENILDPRLLIAFQNRERQEQLMGY. Residues Lys-77, Lys-106, Lys-114, and Lys-125 each participate in a glycyl lysine isopeptide (Lys-Gly) (interchain with G-Cter in SUMO2) cross-link. Positions 125–152 are disordered; sequence KKHHQYQPHSKERSGKPPPPGKSGKYYY. Position 149 is an N6-acetyllysine; alternate (Lys-149). Lys-149 is covalently cross-linked (Glycyl lysine isopeptide (Lys-Gly) (interchain with G-Cter in SUMO2); alternate). Residues Lys-157, Lys-167, and Lys-178 each participate in a glycyl lysine isopeptide (Lys-Gly) (interchain with G-Cter in SUMO2) cross-link. Positions 172-193 are disordered; sequence QYQGGHKEAPSPTCPDLGTKSH. Ser-182 bears the Phosphoserine mark. Glycyl lysine isopeptide (Lys-Gly) (interchain with G-Cter in SUMO2) cross-links involve residues Lys-191, Lys-205, Lys-212, Lys-223, Lys-249, Lys-268, Lys-278, and Lys-280. The segment at 216–244 is disordered; the sequence is GGAGAPGKGSEKGPPNGMTPAPKEAVTGN. 3 stretches are compositionally biased toward basic and acidic residues: residues 281–291, 298–310, and 317–332; these read SGEAAEGEARS, AAEERHPQGDRTF, and SEEKKAEVPCKRREEE. Disordered regions lie at residues 281 to 399 and 430 to 451; these read SGEA…TVGL and TPTCLGGSPVSEHPANVSPTAA. Residues Lys-321, Lys-353, and Lys-366 each participate in a glycyl lysine isopeptide (Lys-Gly) (interchain with G-Cter in SUMO2) cross-link. Positions 381–396 are enriched in basic residues; the sequence is PAHHHHHHHHHHHHHT. Residue Ser-463 is modified to Phosphoserine. Residue Lys-490 forms a Glycyl lysine isopeptide (Lys-Gly) (interchain with G-Cter in SUMO2); alternate linkage. A Glycyl lysine isopeptide (Lys-Gly) (interchain with G-Cter in SUMO); alternate cross-link involves residue Lys-490.

Interacts with SUV39H1 and HIPK2. Interacts with CSNK2B. Component of a PRC1-like complex. The composition of the PRC1 complex differs between the PRC1 complex in pluripotent embryonic stem cells containing RNF2, CBX7 and PCGF2, and the PRC1 complex in differentiating cells containing RNF2, CBX2, CBX4 and BMI1. Interacts with RNF2. Interacts (via chromodomain) with histone H3K9Me3 and single-stranded RNA (ssRNA). Interacts with CHTOP. May interact with H3C15 and H3C1. Interacts with PRDM1. Post-translationally, ubiquitinated. Ubiquitination regulates the function of the Polycomb group (PcG) multiprotein PRC1-like complex. Deubiquitinated by USP26. Expressed in embryoid bodies.

Its subcellular location is the nucleus. The protein resides in the nucleus speckle. The protein operates within protein modification; protein sumoylation. In terms of biological role, E3 SUMO-protein ligase that catalyzes sumoylation of target proteins by promoting the transfer of SUMO from the E2 enzyme to the substrate. Involved in the sumoylation of HNRNPK, a p53/TP53 transcriptional coactivator, hence indirectly regulates p53/TP53 transcriptional activation resulting in p21/CDKN1A expression. Component of a Polycomb group (PcG) multiprotein PRC1-like complex, a complex class required to maintain the transcriptionally repressive state of many genes, including Hox genes, throughout development. PcG PRC1 complex acts via chromatin remodeling and modification of histones; it mediates monoubiquitination of histone H2A 'Lys-119', rendering chromatin heritably changed in its expressibility. Binds to histone H3 trimethylated at 'Lys-9' (H3K9me3). Plays a role in the lineage differentiation of the germ layers in embryonic development. This Mus musculus (Mouse) protein is E3 SUMO-protein ligase CBX4 (Cbx4).